We begin with the raw amino-acid sequence, 662 residues long: Chaperone protein dnaK1 (662 aa).

Threonine 198 is subject to Phosphothreonine; by autocatalysis. Residues 630–662 (DWDDDPWAAPSGPPRGRSLNRRDRDPWDDDFYR) form a disordered region. The segment covering 649-662 (NRRDRDPWDDDFYR) has biased composition (basic and acidic residues).

Belongs to the heat shock protein 70 family.

In terms of biological role, acts as a chaperone. The sequence is that of Chaperone protein dnaK1 (dnaK1) from Parasynechococcus marenigrum (strain WH8102).